Here is a 247-residue protein sequence, read N- to C-terminus: ATP synthase subunit a, chloroplastic (247 aa).

5 helical membrane-spanning segments follow: residues Q38–V58, V95–L115, I134–S154, L199–L219, and G220–G240.

This sequence belongs to the ATPase A chain family. F-type ATPases have 2 components, CF(1) - the catalytic core - and CF(0) - the membrane proton channel. CF(1) has five subunits: alpha(3), beta(3), gamma(1), delta(1), epsilon(1). CF(0) has four main subunits: a, b, b' and c.

It localises to the plastid. Its subcellular location is the chloroplast thylakoid membrane. Functionally, key component of the proton channel; it plays a direct role in the translocation of protons across the membrane. This Agrostis stolonifera (Creeping bentgrass) protein is ATP synthase subunit a, chloroplastic.